We begin with the raw amino-acid sequence, 648 residues long: Beta-glucuronidase (648 aa).

An N-terminal signal peptide occupies residues 1–22; it reads MSPRRSVCWFVLGQLLCSCAVA. N-linked (GlcNAc...) asparagine glycans are attached at residues Asn172 and Asn416. Glu447 (proton donor) is an active-site residue. A glycan (N-linked (GlcNAc...) asparagine) is linked at Asn627.

It belongs to the glycosyl hydrolase 2 family. Homotetramer. In terms of processing, undergoes a post-transcriptional proteolytic cleavage near its C-terminal end, which reduces its size by approximately 3 kDa. The site of this cleavage has as yet not been determined.

It is found in the lysosome. The enzyme catalyses a beta-D-glucuronoside + H2O = D-glucuronate + an alcohol. Its activity is regulated as follows. Inhibited by L-aspartic acid. Functionally, plays an important role in the degradation of dermatan and keratan sulfates. The protein is Beta-glucuronidase (Gusb) of Rattus norvegicus (Rat).